The following is a 544-amino-acid chain: Chaperonin GroEL 1 (544 aa).

Residues 29–32 (TLGP), 86–90 (DGTTT), G413, 479–481 (NAA), and D495 contribute to the ATP site.

This sequence belongs to the chaperonin (HSP60) family. In terms of assembly, forms a cylinder of 14 subunits composed of two heptameric rings stacked back-to-back. Interacts with the co-chaperonin GroES.

The protein localises to the cytoplasm. It carries out the reaction ATP + H2O + a folded polypeptide = ADP + phosphate + an unfolded polypeptide.. Its function is as follows. Together with its co-chaperonin GroES, plays an essential role in assisting protein folding. The GroEL-GroES system forms a nano-cage that allows encapsulation of the non-native substrate proteins and provides a physical environment optimized to promote and accelerate protein folding. This is Chaperonin GroEL 1 from Parasynechococcus marenigrum (strain WH8102).